Here is a 165-residue protein sequence, read N- to C-terminus: Cytochrome b6-f complex subunit 4 (165 aa).

The next 3 helical transmembrane spans lie at 36–56 (LLYI…GLAV), 95–115 (LLGV…PFLE), and 131–151 (TVFL…TLPI).

The protein belongs to the cytochrome b family. PetD subfamily. In terms of assembly, the 4 large subunits of the cytochrome b6-f complex are cytochrome b6, subunit IV (17 kDa polypeptide, petD), cytochrome f and the Rieske protein, while the 4 small subunits are petG, petL, petM and petN. The complex functions as a dimer.

The protein resides in the plastid. It localises to the chloroplast thylakoid membrane. In terms of biological role, component of the cytochrome b6-f complex, which mediates electron transfer between photosystem II (PSII) and photosystem I (PSI), cyclic electron flow around PSI, and state transitions. In Populus alba (White poplar), this protein is Cytochrome b6-f complex subunit 4.